A 176-amino-acid chain; its full sequence is Oligoribonuclease (176 aa).

The region spanning 2–159 is the Exonuclease domain; it reads EMTGLNPETD…DDILESIEEM (158 aa). The active site involves Y117.

It belongs to the oligoribonuclease family.

Its subcellular location is the cytoplasm. Its function is as follows. 3'-to-5' exoribonuclease specific for small oligoribonucleotides. The protein is Oligoribonuclease of Neisseria gonorrhoeae (strain ATCC 700825 / FA 1090).